Reading from the N-terminus, the 1220-residue chain is Formin-F (1220 aa).

A compositionally biased stretch (basic residues) spans 1–10 (MNRIFGRKKK). The disordered stretch occupies residues 1–62 (MNRIFGRKKK…TNSKSADKFD (62 aa)). Positions 6 to 373 (GRKKKDKDSD…QISVNKPMIG (368 aa)) constitute a GBD/FH3 domain. Residues 11 to 20 (DKDSDEKGST) are compositionally biased toward basic and acidic residues. Positions 41–56 (AYSSLQPDGNNSTNSK) are enriched in polar residues. The stretch at 392–428 (VALQSEFQKNIEELAKVKDQLKKANFDLNIANQELSS) forms a coiled coil. 3 disordered regions span residues 461–659 (IDSN…KFTV), 711–732 (SQKK…GTVS), and 1049–1192 (DEAK…KKDI). Composition is skewed to low complexity over residues 501-518 (SKPP…SSSQ) and 525-554 (SNLS…PQQQ). The FH1 domain maps to 532–655 (SDSLSNDFKS…NSNKPPANAP (124 aa)). Polar residues predominate over residues 555 to 564 (NIESTLTPEP). Positions 575–638 (TTPPPAPPAP…GKGGPPPPPG (64 aa)) are enriched in pro residues. The FH2 domain maps to 656 to 1054 (KFTVSKPTTK…AIKRDEAKAK (399 aa)). Residues 711-722 (SQKKLEASDKKS) show a composition bias toward basic and acidic residues. Residues 1032 to 1062 (YKDFQRDKEAAERAIKRDEAKAKKAQQLKRM) adopt a coiled-coil conformation. Residues 1066-1083 (IASSTNNKNPLASSSTSV) show a composition bias toward polar residues. The DAD domain maps to 1083 to 1158 (VGDGGMVEDI…TPSKSGSRRE (76 aa)). Residues 1117-1142 (DSSSITTISEQSENSNTSSITITTPS) show a composition bias toward low complexity. Basic and acidic residues predominate over residues 1161–1192 (TSKSSDKDKEKEKEKEKQCESTESEDINKKDI).

The protein belongs to the formin homology family. Diaphanous subfamily. Interacts (via GBD/FH3 domain) with activated Rho-GTPases.

Its function is as follows. Formins play an important role in the nucleation of actin and the formation of linear actin filaments. This Dictyostelium discoideum (Social amoeba) protein is Formin-F (forF).